The primary structure comprises 420 residues: ATP phosphoribosyltransferase regulatory subunit (420 aa).

The protein belongs to the class-II aminoacyl-tRNA synthetase family. HisZ subfamily. As to quaternary structure, heteromultimer composed of HisG and HisZ subunits.

Its subcellular location is the cytoplasm. The protein operates within amino-acid biosynthesis; L-histidine biosynthesis; L-histidine from 5-phospho-alpha-D-ribose 1-diphosphate: step 1/9. Required for the first step of histidine biosynthesis. May allow the feedback regulation of ATP phosphoribosyltransferase activity by histidine. The chain is ATP phosphoribosyltransferase regulatory subunit from Bacillus thuringiensis subsp. konkukian (strain 97-27).